A 433-amino-acid chain; its full sequence is Beta-agarase AgaA (433 aa).

An N-terminal signal peptide occupies residues 1–20 (MRKITSILLTCVMGCTATYA). One can recognise a GH16 domain in the interval 21–295 (ADWDGVPVPA…WVRFYKPVPI (275 aa)). Residue E147 is the Nucleophile of the active site. E152 acts as the Proton donor in catalysis. Residues 300–431 (TTVELGNFHN…QWNGDEIRFV (132 aa)) enclose the CBM6 domain.

The protein belongs to the glycosyl hydrolase 16 family. In terms of assembly, monomer.

The protein resides in the periplasm. The catalysed reaction is Hydrolysis of (1-&gt;4)-beta-D-galactosidic linkages in agarose, giving the tetramer as the predominant product.. Its activity is regulated as follows. Activity is abolished by Hg(2+), Cu(2+), Pb(2+) and Zn(2+) ions, but is not affected by NaCl up to at least 1.0 M, Mg(2+), K(+) and Ca(2+). Not affected by iodoacetamide, p-chloromercuribenzoate, dithiothreitol, 2-mercaptoethanol, EDTA and sodium dodecyl sulfate. Inhibited by N-bromosuccinimide. Endo-type beta-agarase, which produces neoagarotetraose (NA4) as the main final product, with a small amount of neoagarohexaose (NA6) and neoagarobiose (NA2). In Microbulbifer thermotolerans, this protein is Beta-agarase AgaA.